The chain runs to 88 residues: EMBRYO SURROUNDING FACTOR 1-like protein 3 (88 aa).

Positions Met1–Cys22 are cleaved as a signal peptide. 3 disulfide bridges follow: Cys41/Cys56, Cys54/Cys80, and Cys57/Cys67.

It belongs to the MEG family. In terms of tissue distribution, expressed in stems, leaves and flowers.

This Arabidopsis thaliana (Mouse-ear cress) protein is EMBRYO SURROUNDING FACTOR 1-like protein 3 (ESFL3).